The primary structure comprises 90 residues: Probable Fe(2+)-trafficking protein (90 aa).

This sequence belongs to the Fe(2+)-trafficking protein family.

Its function is as follows. Could be a mediator in iron transactions between iron acquisition and iron-requiring processes, such as synthesis and/or repair of Fe-S clusters in biosynthetic enzymes. In Pseudomonas syringae pv. tomato (strain ATCC BAA-871 / DC3000), this protein is Probable Fe(2+)-trafficking protein.